The sequence spans 91 residues: Apolipoprotein C-III (91 aa).

An N-terminal signal peptide occupies residues 1-20 (MQPRVLLAVTLLALLVSARA). A Methionine sulfoxide modification is found at Met-63. The tract at residues 68–91 (DSMKGYWTSLIGRLSGFLDSTPSS) is lipid-binding.

Belongs to the apolipoprotein C3 family.

It is found in the secreted. Functionally, component of triglyceride-rich very low density lipoproteins (VLDL) and high density lipoproteins (HDL) in plasma. Plays a multifaceted role in triglyceride homeostasis. Intracellularly, promotes hepatic very low density lipoprotein 1 (VLDL1) assembly and secretion; extracellularly, attenuates hydrolysis and clearance of triglyceride-rich lipoproteins (TRLs). Impairs the lipolysis of TRLs by inhibiting lipoprotein lipase and the hepatic uptake of TRLs by remnant receptors. Formed of several curved helices connected via semiflexible hinges, so that it can wrap tightly around the curved micelle surface and easily adapt to the different diameters of its natural binding partners. The polypeptide is Apolipoprotein C-III (APOC3) (Cavia porcellus (Guinea pig)).